The primary structure comprises 210 residues: 7-carboxy-7-deazaguanine synthase (210 aa).

Residues 12–14 (LQG) and arginine 27 each bind substrate. A Radical SAM core domain is found at 18–210 (NAGRPAVFCR…MQTHKYLNIP (193 aa)). The [4Fe-4S] cluster site is built by cysteine 31, cysteine 46, and cysteine 49. 48–50 (FCD) serves as a coordination point for S-adenosyl-L-methionine. Threonine 51 serves as a coordination point for Mg(2+). Position 90 (threonine 90) interacts with substrate. Residues glycine 92, 133–135 (SPK), and 173–176 (QPMD) each bind S-adenosyl-L-methionine. Proline 210 contributes to the substrate binding site.

The protein belongs to the radical SAM superfamily. 7-carboxy-7-deazaguanine synthase family. In terms of assembly, homodimer. The cofactor is [4Fe-4S] cluster. S-adenosyl-L-methionine serves as cofactor. It depends on Mg(2+) as a cofactor.

It catalyses the reaction 6-carboxy-5,6,7,8-tetrahydropterin + H(+) = 7-carboxy-7-deazaguanine + NH4(+). The protein operates within purine metabolism; 7-cyano-7-deazaguanine biosynthesis. In terms of biological role, catalyzes the complex heterocyclic radical-mediated conversion of 6-carboxy-5,6,7,8-tetrahydropterin (CPH4) to 7-carboxy-7-deazaguanine (CDG), a step common to the biosynthetic pathways of all 7-deazapurine-containing compounds. The protein is 7-carboxy-7-deazaguanine synthase of Burkholderia multivorans (strain ATCC 17616 / 249).